A 108-amino-acid chain; its full sequence is Urease subunit beta (108 aa).

Belongs to the urease beta subunit family. As to quaternary structure, heterotrimer of UreA (gamma), UreB (beta) and UreC (alpha) subunits. Three heterotrimers associate to form the active enzyme.

Its subcellular location is the cytoplasm. It catalyses the reaction urea + 2 H2O + H(+) = hydrogencarbonate + 2 NH4(+). The protein operates within nitrogen metabolism; urea degradation; CO(2) and NH(3) from urea (urease route): step 1/1. This Trichormus variabilis (strain ATCC 29413 / PCC 7937) (Anabaena variabilis) protein is Urease subunit beta.